The chain runs to 379 residues: Succinyl-diaminopimelate desuccinylase (379 aa).

A Zn(2+)-binding site is contributed by His70. Residue Asp72 is part of the active site. Asp103 serves as a coordination point for Zn(2+). Glu137 functions as the Proton acceptor in the catalytic mechanism. Zn(2+)-binding residues include Glu138, Glu166, and His352.

Belongs to the peptidase M20A family. DapE subfamily. Homodimer. It depends on Zn(2+) as a cofactor. Co(2+) serves as cofactor.

It catalyses the reaction N-succinyl-(2S,6S)-2,6-diaminopimelate + H2O = (2S,6S)-2,6-diaminopimelate + succinate. Its pathway is amino-acid biosynthesis; L-lysine biosynthesis via DAP pathway; LL-2,6-diaminopimelate from (S)-tetrahydrodipicolinate (succinylase route): step 3/3. In terms of biological role, catalyzes the hydrolysis of N-succinyl-L,L-diaminopimelic acid (SDAP), forming succinate and LL-2,6-diaminopimelate (DAP), an intermediate involved in the bacterial biosynthesis of lysine and meso-diaminopimelic acid, an essential component of bacterial cell walls. In Paraburkholderia xenovorans (strain LB400), this protein is Succinyl-diaminopimelate desuccinylase.